We begin with the raw amino-acid sequence, 431 residues long: UDP-N-acetylglucosamine 1-carboxyvinyltransferase (431 aa).

Residue 22-23 coordinates phosphoenolpyruvate; that stretch reads KN. Arg-102 is a UDP-N-acetyl-alpha-D-glucosamine binding site. Cys-126 (proton donor) is an active-site residue. 2-(S-cysteinyl)pyruvic acid O-phosphothioketal is present on Cys-126. Residues Asp-318 and Ile-340 each contribute to the UDP-N-acetyl-alpha-D-glucosamine site.

The protein belongs to the EPSP synthase family. MurA subfamily.

The protein resides in the cytoplasm. The enzyme catalyses phosphoenolpyruvate + UDP-N-acetyl-alpha-D-glucosamine = UDP-N-acetyl-3-O-(1-carboxyvinyl)-alpha-D-glucosamine + phosphate. The protein operates within cell wall biogenesis; peptidoglycan biosynthesis. In terms of biological role, cell wall formation. Adds enolpyruvyl to UDP-N-acetylglucosamine. The protein is UDP-N-acetylglucosamine 1-carboxyvinyltransferase of Bartonella henselae (strain ATCC 49882 / DSM 28221 / CCUG 30454 / Houston 1) (Rochalimaea henselae).